The primary structure comprises 417 residues: UPF0754 membrane protein PCC8801_0398 (417 aa).

The next 2 helical transmembrane spans lie at 11 to 31 and 395 to 415; these read FSLL…GYFT and IVNI…ILLI.

Belongs to the UPF0754 family.

The protein localises to the cell inner membrane. This chain is UPF0754 membrane protein PCC8801_0398, found in Rippkaea orientalis (strain PCC 8801 / RF-1) (Cyanothece sp. (strain PCC 8801)).